A 182-amino-acid chain; its full sequence is Large ribosomal subunit protein uL5m (182 aa).

It belongs to the universal ribosomal protein uL5 family.

Its subcellular location is the mitochondrion. This is Large ribosomal subunit protein uL5m (RPL5) from Reclinomonas americana.